The primary structure comprises 88 residues: EMBRYO SURROUNDING FACTOR 1-like protein 11 (88 aa).

Positions 1-23 (MISSSHFAIFCIILVSLFALQQY) are cleaved as a signal peptide. 4 disulfides stabilise this stretch: C44-C59, C49-C78, C57-C74, and C60-C67.

This sequence belongs to the MEG family. As to expression, expressed in stems.

This chain is EMBRYO SURROUNDING FACTOR 1-like protein 11 (ESFL11), found in Arabidopsis thaliana (Mouse-ear cress).